The sequence spans 148 residues: MSSDFPHYNFRMPNIGFQNLPLNIYIVVFGTAIFVFILSLLFCCYLIRLRHQAHKEFYAYKQVILKEKVKELNLHELCAVCLEDFKPRDELGICPCKHAFHRKCLIKWLEVRKVCPLCNMPVLQLAQLHSKQDRGPPQGPLPGAENIV.

A helical membrane pass occupies residues 24–44; the sequence is IYIVVFGTAIFVFILSLLFCC. The RING-type zinc finger occupies 78-119; sequence CAVCLEDFKPRDELGICPCKHAFHRKCLIKWLEVRKVCPLCN.

In terms of assembly, interacts with TRPC1, TRPC3, TRPC4, TRPC5, TRPC6 and TRPC7.

The protein resides in the golgi apparatus membrane. In terms of biological role, may play a role in TRPCs intracellular trafficking. This is RING finger protein 24 (RNF24) from Homo sapiens (Human).